A 344-amino-acid chain; its full sequence is tRNA N6-adenosine threonylcarbamoyltransferase (344 aa).

Residues His-115 and His-119 each contribute to the Fe cation site. Residues Leu-137–Gly-141, Asp-170, Gly-183, Asp-187, and Asn-276 each bind substrate. A Fe cation-binding site is contributed by Asp-306.

This sequence belongs to the KAE1 / TsaD family. It depends on Fe(2+) as a cofactor.

Its subcellular location is the cytoplasm. The enzyme catalyses L-threonylcarbamoyladenylate + adenosine(37) in tRNA = N(6)-L-threonylcarbamoyladenosine(37) in tRNA + AMP + H(+). Its function is as follows. Required for the formation of a threonylcarbamoyl group on adenosine at position 37 (t(6)A37) in tRNAs that read codons beginning with adenine. Is involved in the transfer of the threonylcarbamoyl moiety of threonylcarbamoyl-AMP (TC-AMP) to the N6 group of A37, together with TsaE and TsaB. TsaD likely plays a direct catalytic role in this reaction. This Limosilactobacillus fermentum (strain NBRC 3956 / LMG 18251) (Lactobacillus fermentum) protein is tRNA N6-adenosine threonylcarbamoyltransferase.